The following is a 724-amino-acid chain: Golgin subfamily A member 6-like protein 6 (724 aa).

Disordered regions lie at residues 1–108 (MLMW…HQEA), 314–342 (QEEK…MRRQ), 374–454 (MHEQ…EMWR), 517–548 (QEEM…KMWR), and 561–724 (WRQE…MQEH). The span at 15–29 (LPTHPHLPTHPHLPT) shows a compositional bias: basic residues. Positions 39–60 (MSKETRQSKLAEAKEQLTDHHP) are enriched in basic and acidic residues. 2 stretches are compositionally biased toward polar residues: residues 61 to 71 (QTNPSVGTAAS) and 79 to 91 (NNGT…TSGG). Positions 94–108 (SPEDEQKASHQHQEA) are enriched in basic and acidic residues. Positions 164-686 (ELEQALSAVA…EKMWEQEEKM (523 aa)) form a coiled coil.

The protein belongs to the GOLGA6 family.

This chain is Golgin subfamily A member 6-like protein 6 (GOLGA6L6), found in Homo sapiens (Human).